The following is a 356-amino-acid chain: uncharacterized protein (356 aa).

Transmembrane regions (helical) follow at residues serine 258 to tyrosine 275, proline 290 to leucine 312, and leucine 325 to serine 347.

The protein localises to the cell membrane. This is an uncharacterized protein from Archaeoglobus fulgidus (strain ATCC 49558 / DSM 4304 / JCM 9628 / NBRC 100126 / VC-16).